Here is a 1233-residue protein sequence, read N- to C-terminus: Structural maintenance of chromosomes protein 1A (1233 aa).

32 to 39 (GPNGSGKS) serves as a coordination point for ATP. Coiled-coil stretches lie at residues 104 to 124 (EYKINNKVVQLHEYSEELEKL) and 163 to 503 (ELAQ…KAEI). The span at 284–293 (IKEKDSELNQ) shows a compositional bias: basic and acidic residues. Disordered stretches follow at residues 284–308 (IKEKDSELNQKRPQYIKAKENTSHK) and 348–369 (QEFEERMEEESQSQGRDLTLEE). Phosphoserine occurs at positions 358 and 360. Positions 515–629 (VYGRLIDLCQ…DNVEDARRIA (115 aa)) constitute an SMC hinge domain. 2 positions are modified to N6-acetyllysine: K648 and K713. Positions 667 to 935 (DEKAVDKLKE…RHNLLQACKM (269 aa)) form a coiled coil. The interval 947-969 (MDDISQEEGSSQGEESVSGSQRT) is disordered. Residues 953–967 (EEGSSQGEESVSGSQ) show a composition bias toward low complexity. S957, S962, S966, and S970 each carry phosphoserine. Residues 988–1068 (EDLKDAQAEE…FEQIKKERFD (81 aa)) are a coiled coil. At K1037 the chain carries N6-acetyllysine.

Belongs to the SMC family. SMC1 subfamily. In terms of assembly, forms a heterodimer with SMC3 in cohesin complexes. Cohesin complexes are composed of the SMC1 (SMC1A or SMC1B) and SMC3 heterodimer attached via their SMC hinge domain, RAD21 which link them, and one STAG protein (STAG1, STAG2 or STAG3), which interacts with RAD21. In germ cell cohesin complexes, SMC1A is mutually exclusive with SMC1B. Interacts with STAG3. Found in a complex with CDCA5, SMC3 and RAD21, PDS5A/SCC-112 and PDS5B/APRIN. Found in a complex containing POLE and SMC3. Interacts with BRCA1, SYCP2, NDC80, RPGR and BRAT1. The cohesin complex interacts with the cohesin loading complex subunits NIPBL/Scc2 (via HEAT repeats) and MAU2/Scc4. NIPBL directly contacts all members of the complex, RAD21, SMC1A/B, SMC3 and STAG1. In terms of processing, phosphorylated upon ionizing radiation or DNA methylation. Phosphorylation of Ser-957 and Ser-966 activates it and is required for S-phase checkpoint activation. Ubiquitinated by the DCX(DCAF15) complex, leading to its degradation. As to expression, ubiquitous (at protein level).

The protein resides in the nucleus. It is found in the chromosome. The protein localises to the centromere. In terms of biological role, involved in chromosome cohesion during cell cycle and in DNA repair. Involved in DNA repair via its interaction with BRCA1 and its related phosphorylation by ATM, and works as a downstream effector in the ATM/NBS1 branch of S-phase checkpoint. Central component of cohesin complex. The cohesin complex is required for the cohesion of sister chromatids after DNA replication. The cohesin complex apparently forms a large proteinaceous ring within which sister chromatids can be trapped. At anaphase, the complex is cleaved and dissociates from chromatin, allowing sister chromatids to segregate. The cohesin complex may also play a role in spindle pole assembly during mitosis. Involved in DNA repair via its interaction with BRCA1 and its related phosphorylation by ATM, or via its phosphorylation by ATR. Works as a downstream effector both in the ATM/NBS1 branch and in the ATR/MSH2 branch of S-phase checkpoint. The chain is Structural maintenance of chromosomes protein 1A (Smc1a) from Mus musculus (Mouse).